Here is an 82-residue protein sequence, read N- to C-terminus: Delta-actitoxin-Aeq2b 3 (82 aa).

Residues 1–19 (MNRLMILVFAAVILALASA) form the signal peptide. Positions 20 to 26 (DEDVDIT) are excised as a propeptide. 3 disulfides stabilise this stretch: C32–C79, C34–C69, and C62–C80.

The protein belongs to the sea anemone sodium channel inhibitory toxin family. Type I subfamily.

It localises to the secreted. Its subcellular location is the nematocyst. Functionally, binds specifically to voltage-gated sodium channels (Nav), thereby delaying their inactivation during signal transduction. Causes death to crabs. In Actinia equina (Beadlet anemone), this protein is Delta-actitoxin-Aeq2b 3.